The following is a 423-amino-acid chain: Kynureninase (423 aa).

Residues L105, S106, 133-136, D218, H221, and Y243 contribute to the pyridoxal 5'-phosphate site; that span reads FPSD. Position 244 is an N6-(pyridoxal phosphate)lysine (K244). 2 residues coordinate pyridoxal 5'-phosphate: W273 and N301.

Belongs to the kynureninase family. Homodimer. Pyridoxal 5'-phosphate is required as a cofactor.

It carries out the reaction L-kynurenine + H2O = anthranilate + L-alanine + H(+). The enzyme catalyses 3-hydroxy-L-kynurenine + H2O = 3-hydroxyanthranilate + L-alanine + H(+). The protein operates within amino-acid degradation; L-kynurenine degradation; L-alanine and anthranilate from L-kynurenine: step 1/1. Its pathway is cofactor biosynthesis; NAD(+) biosynthesis; quinolinate from L-kynurenine: step 2/3. Its function is as follows. Catalyzes the cleavage of L-kynurenine (L-Kyn) and L-3-hydroxykynurenine (L-3OHKyn) into anthranilic acid (AA) and 3-hydroxyanthranilic acid (3-OHAA), respectively. The polypeptide is Kynureninase (Xanthomonas axonopodis pv. citri (strain 306)).